The sequence spans 123 residues: Small ribosomal subunit protein uS13 (123 aa).

The disordered stretch occupies residues 96–123; the sequence is LPVRGQRTKTNARTRKGPKKTVGARRKK.

The protein belongs to the universal ribosomal protein uS13 family. As to quaternary structure, part of the 30S ribosomal subunit. Forms a loose heterodimer with protein S19. Forms two bridges to the 50S subunit in the 70S ribosome.

Functionally, located at the top of the head of the 30S subunit, it contacts several helices of the 16S rRNA. In the 70S ribosome it contacts the 23S rRNA (bridge B1a) and protein L5 of the 50S subunit (bridge B1b), connecting the 2 subunits; these bridges are implicated in subunit movement. Contacts the tRNAs in the A and P-sites. This Desulforamulus reducens (strain ATCC BAA-1160 / DSM 100696 / MI-1) (Desulfotomaculum reducens) protein is Small ribosomal subunit protein uS13.